Consider the following 301-residue polypeptide: Small ribosomal subunit protein uS2 (301 aa).

This sequence belongs to the universal ribosomal protein uS2 family. Component of the small ribosomal subunit. Mature ribosomes consist of a small (40S) and a large (60S) subunit. The 40S subunit contains about 33 different proteins and 1 molecule of RNA (18S). The 60S subunit contains about 49 different proteins and 3 molecules of RNA (28S, 5.8S and 5S). Interacts with ribosomal protein S21.

It is found in the cytoplasm. Required for the assembly and/or stability of the 40S ribosomal subunit. Required for the processing of the 20S rRNA-precursor to mature 18S rRNA in a late step of the maturation of 40S ribosomal subunits. The protein is Small ribosomal subunit protein uS2 of Brugia malayi (Filarial nematode worm).